A 278-amino-acid chain; its full sequence is UPF0276 protein Shew_2240 (278 aa).

The protein belongs to the UPF0276 family.

The protein is UPF0276 protein Shew_2240 of Shewanella loihica (strain ATCC BAA-1088 / PV-4).